Consider the following 650-residue polypeptide: 1-deoxy-D-xylulose-5-phosphate synthase (650 aa).

Residues histidine 73 and 113–115 (SHA) each bind thiamine diphosphate. Aspartate 145 provides a ligand contact to Mg(2+). Residues 146 to 147 (GA), asparagine 175, tyrosine 287, and glutamate 369 contribute to the thiamine diphosphate site. Mg(2+) is bound at residue asparagine 175.

It belongs to the transketolase family. DXPS subfamily. In terms of assembly, homodimer. It depends on Mg(2+) as a cofactor. Thiamine diphosphate serves as cofactor.

It catalyses the reaction D-glyceraldehyde 3-phosphate + pyruvate + H(+) = 1-deoxy-D-xylulose 5-phosphate + CO2. It participates in metabolic intermediate biosynthesis; 1-deoxy-D-xylulose 5-phosphate biosynthesis; 1-deoxy-D-xylulose 5-phosphate from D-glyceraldehyde 3-phosphate and pyruvate: step 1/1. Functionally, catalyzes the acyloin condensation reaction between C atoms 2 and 3 of pyruvate and glyceraldehyde 3-phosphate to yield 1-deoxy-D-xylulose-5-phosphate (DXP). This is 1-deoxy-D-xylulose-5-phosphate synthase from Leifsonia xyli subsp. xyli (strain CTCB07).